The chain runs to 423 residues: AP-1 complex subunit mu-1 (423 aa).

The residue at position 2 (S2) is an N-acetylserine. T152, T154, and T223 each carry phosphothreonine. The region spanning 168–421 is the MHD domain; sequence KNEVFLDVIE…ITQNGDYQLR (254 aa).

It belongs to the adaptor complexes medium subunit family. In terms of assembly, adaptor protein complex 1 (AP-1) is a heterotetramer composed of two large adaptins (gamma-type subunit AP1G1 and beta-type subunit AP1B1), a medium adaptin (mu-type subunit AP1M1 or AP1M2) and a small adaptin (sigma-type subunit AP1S1 or AP1S2 or AP1S3). Interacts with MARCHF11. Post-translationally, phosphorylation of membrane-bound AP1M1/AP1M2 increases its affinity for sorting signals.

Its subcellular location is the cytoplasmic vesicle. It localises to the clathrin-coated vesicle membrane. The protein resides in the golgi apparatus. Functionally, subunit of clathrin-associated adaptor protein complex 1 that plays a role in protein sorting in the trans-Golgi network (TGN) and endosomes. The AP complexes mediate the recruitment of clathrin to membranes and the recognition of sorting signals within the cytosolic tails of transmembrane cargo molecules. The protein is AP-1 complex subunit mu-1 of Rattus norvegicus (Rat).